The sequence spans 367 residues: 3-dehydroquinate synthase (367 aa).

NAD(+) is bound by residues 69–74, 103–107, 127–128, lysine 140, and lysine 149; these read DGEAFK, GVIGD, and TT. Glutamate 182, histidine 245, and histidine 262 together coordinate Zn(2+).

The protein belongs to the sugar phosphate cyclases superfamily. Dehydroquinate synthase family. Requires Co(2+) as cofactor. Zn(2+) is required as a cofactor. NAD(+) serves as cofactor.

The protein localises to the cytoplasm. It carries out the reaction 7-phospho-2-dehydro-3-deoxy-D-arabino-heptonate = 3-dehydroquinate + phosphate. It participates in metabolic intermediate biosynthesis; chorismate biosynthesis; chorismate from D-erythrose 4-phosphate and phosphoenolpyruvate: step 2/7. In terms of biological role, catalyzes the conversion of 3-deoxy-D-arabino-heptulosonate 7-phosphate (DAHP) to dehydroquinate (DHQ). This Pseudomonas syringae pv. syringae (strain B728a) protein is 3-dehydroquinate synthase.